We begin with the raw amino-acid sequence, 240 residues long: Cell division control protein 14 (240 aa).

Interacts with sid1.

The protein localises to the cytoplasm. The protein resides in the cytoskeleton. It is found in the microtubule organizing center. It localises to the spindle pole body. In terms of biological role, has a role in the septation initiation network (SIN) required for cytokinesis. The chain is Cell division control protein 14 (cdc14) from Schizosaccharomyces pombe (strain 972 / ATCC 24843) (Fission yeast).